The chain runs to 380 residues: MTNPYNWIEKSLETLHKANWYRSVKTIHSRSGSVVNLKGNLVINFASNDYLGLAGDERLINASIDAIKQYGTGSTGSRLLSGHRPIHRELENAIASFKQTEDAIVFSSGYLANLGTITALVGQRDLILGDEYNHSSLKNGSKLSGATVLDYEHGNLEDLNTKLVNYRRSYRRCLILTDTVFSMDGDICPLPQLLDLAEDFNCMVLVDEAHATGVMGKTGAGCVEHLNCSGRELIQMGTLSKALGSLGGYVAGSFQLVEFLRNRAATWIYTTGLSPGDTAAALTALNIIQAEPQRRQQLWENVGLLKEQLSGFNLFPSETPIICLGLNTPTEALILAQKLQDGGIFAPAIRPPTVPTSRIRFTLMATHQPCHFQRLGAVIR.

Arginine 22 contributes to the substrate binding site. 109–110 is a pyridoxal 5'-phosphate binding site; the sequence is GY. Histidine 134 provides a ligand contact to substrate. Pyridoxal 5'-phosphate contacts are provided by residues serine 182, 207–210, and 238–241; these read DEAH and TLSK. The residue at position 241 (lysine 241) is an N6-(pyridoxal phosphate)lysine. A substrate-binding site is contributed by threonine 353.

The protein belongs to the class-II pyridoxal-phosphate-dependent aminotransferase family. BioF subfamily. Homodimer. Pyridoxal 5'-phosphate serves as cofactor.

The enzyme catalyses 6-carboxyhexanoyl-[ACP] + L-alanine + H(+) = (8S)-8-amino-7-oxononanoate + holo-[ACP] + CO2. It participates in cofactor biosynthesis; biotin biosynthesis. In terms of biological role, catalyzes the decarboxylative condensation of pimeloyl-[acyl-carrier protein] and L-alanine to produce 8-amino-7-oxononanoate (AON), [acyl-carrier protein], and carbon dioxide. The sequence is that of Putative 8-amino-7-oxononanoate synthase (bioF) from Gloeothece citriformis (strain PCC 7424) (Cyanothece sp. (strain PCC 7424)).